The chain runs to 210 residues: Tetraspanin-31 (210 aa).

Residues 1-12 (MVCGGFACSRNA) are Cytoplasmic-facing. The chain crosses the membrane as a helical span at residues 13-33 (LCALNVVYMLVGFLLIGVAAW). Residues 34–44 (GKGLGVVSSIH) lie on the Extracellular side of the membrane. The chain crosses the membrane as a helical span at residues 45–65 (IIGGVIAVGVFLLLIAVAGLV). At 66–72 (GAANHHQ) the chain is on the cytoplasmic side. Residues 73 to 93 (VLLFFYMIILGLVFIFQFGIS) form a helical membrane-spanning segment. Residues 94 to 173 (CSCLAINRNT…FLKHSDKALK (80 aa)) are Extracellular-facing. N-linked (GlcNAc...) asparagine glycans are attached at residues Asn109, Asn117, and Asn134. Residues 174–194 (ILGGVGLFFSFTEILGVWLAM) traverse the membrane as a helical segment. Over 195–210 (RFRNQKDPRANPSAFL) the chain is Cytoplasmic.

It belongs to the tetraspanin (TM4SF) family.

It is found in the membrane. In Mus musculus (Mouse), this protein is Tetraspanin-31 (Tspan31).